We begin with the raw amino-acid sequence, 485 residues long: Glutamate--tRNA ligase 1 (485 aa).

The 'HIGH' region motif lies at 9 to 19 (PSPTGHLHIGG). The short motif at 250–254 (KMSKR) is the 'KMSKS' region element. Lys253 contacts ATP.

The protein belongs to the class-I aminoacyl-tRNA synthetase family. Glutamate--tRNA ligase type 1 subfamily. In terms of assembly, monomer.

It is found in the cytoplasm. It carries out the reaction tRNA(Glu) + L-glutamate + ATP = L-glutamyl-tRNA(Glu) + AMP + diphosphate. Its function is as follows. Catalyzes the attachment of glutamate to tRNA(Glu) in a two-step reaction: glutamate is first activated by ATP to form Glu-AMP and then transferred to the acceptor end of tRNA(Glu). This chain is Glutamate--tRNA ligase 1, found in Caldicellulosiruptor saccharolyticus (strain ATCC 43494 / DSM 8903 / Tp8T 6331).